Here is a 478-residue protein sequence, read N- to C-terminus: Glycogen synthase (478 aa).

Residue K15 participates in ADP-alpha-D-glucose binding.

The protein belongs to the glycosyltransferase 1 family. Bacterial/plant glycogen synthase subfamily.

The enzyme catalyses [(1-&gt;4)-alpha-D-glucosyl](n) + ADP-alpha-D-glucose = [(1-&gt;4)-alpha-D-glucosyl](n+1) + ADP + H(+). Its pathway is glycan biosynthesis; glycogen biosynthesis. Its function is as follows. Synthesizes alpha-1,4-glucan chains using ADP-glucose. This is Glycogen synthase from Bacillus cytotoxicus (strain DSM 22905 / CIP 110041 / 391-98 / NVH 391-98).